Consider the following 877-residue polypeptide: Phosphoenolpyruvate carboxylase (877 aa).

Active-site residues include H138 and K544.

It belongs to the PEPCase type 1 family. Mg(2+) serves as cofactor.

The enzyme catalyses oxaloacetate + phosphate = phosphoenolpyruvate + hydrogencarbonate. In terms of biological role, forms oxaloacetate, a four-carbon dicarboxylic acid source for the tricarboxylic acid cycle. The chain is Phosphoenolpyruvate carboxylase from Vibrio vulnificus (strain YJ016).